Consider the following 3020-residue polypeptide: Protein furry homolog (3020 aa).

At tyrosine 213 the chain carries Phosphotyrosine. Disordered stretches follow at residues 1378-1404 (GSSP…LKGN), 1529-1554 (ASGT…ESKI), and 1746-1773 (SSPV…GNLP). A phosphoserine mark is found at serine 1382 and serine 1383. The segment covering 1752 to 1772 (SGLNSSSTSSSISLGGSSGNL) has biased composition (low complexity). A phosphoserine mark is found at serine 1936 and serine 1940. Positions 1937–1956 (RSSSPDLSSSSKLTASRKST) are enriched in low complexity. Disordered stretches follow at residues 1937–2042 (RSSS…PSHV) and 2355–2384 (LQNS…SNSN). A compositionally biased stretch (gly residues) spans 1966-1976 (PGSGGGGGGSG). Positions 2016-2042 (ACTQQGLSSKTRSNSSLKESLTDPSHV) are enriched in polar residues. A compositionally biased stretch (low complexity) spans 2369 to 2384 (AVTRSASSTSSGSNSN). Residues serine 2427 and serine 2428 each carry the phosphoserine modification. A disordered region spans residues 2439–2458 (TSLVSSEDGPREQENMDDTN). Phosphoserine is present on serine 2495. A disordered region spans residues 2508–2535 (EERQLSRSTPSLNKMSHEDSDESSEEDL). Threonine 2516 bears the Phosphothreonine; by CDK1 mark. Acidic residues predominate over residues 2526–2535 (DSDESSEEDL). At serine 2815 the chain carries Phosphoserine.

It belongs to the furry protein family. When phosphorylated by CDK1, interacts with PLK1; this interaction occurs in mitotic cells, but not in interphase cells, and leads to further FRY phosphorylation by PLK1. Post-translationally, phosphorylated by AURKA, CDK1 and PLK1.

Its subcellular location is the cytoplasm. The protein resides in the cytoskeleton. It localises to the microtubule organizing center. It is found in the centrosome. The protein localises to the spindle pole. Plays a crucial role in the structural integrity of mitotic centrosomes and in the maintenance of spindle bipolarity by promoting PLK1 activity at the spindle poles in early mitosis. May function as a scaffold promoting the interaction between AURKA and PLK1, thereby enhancing AURKA-mediated PLK1 phosphorylation. The protein is Protein furry homolog (Fry) of Mus musculus (Mouse).